Here is a 447-residue protein sequence, read N- to C-terminus: Na(+)-translocating NADH-quinone reductase subunit A (447 aa).

The protein belongs to the NqrA family. In terms of assembly, composed of six subunits; NqrA, NqrB, NqrC, NqrD, NqrE and NqrF.

The catalysed reaction is a ubiquinone + n Na(+)(in) + NADH + H(+) = a ubiquinol + n Na(+)(out) + NAD(+). In terms of biological role, NQR complex catalyzes the reduction of ubiquinone-1 to ubiquinol by two successive reactions, coupled with the transport of Na(+) ions from the cytoplasm to the periplasm. NqrA to NqrE are probably involved in the second step, the conversion of ubisemiquinone to ubiquinol. This chain is Na(+)-translocating NADH-quinone reductase subunit A, found in Haemophilus influenzae (strain 86-028NP).